The sequence spans 238 residues: Ribitol-5-phosphate cytidylyltransferase 2 (238 aa).

Residues 7–10 (LAGG) and 81–87 (GTDRNET) contribute to the CTP site.

This sequence belongs to the IspD/TarI cytidylyltransferase family. TarI subfamily.

The catalysed reaction is D-ribitol 5-phosphate + CTP + H(+) = CDP-L-ribitol + diphosphate. It participates in cell wall biogenesis; poly(ribitol phosphate) teichoic acid biosynthesis. Its function is as follows. Catalyzes the transfer of the cytidylyl group of CTP to D-ribitol 5-phosphate. The chain is Ribitol-5-phosphate cytidylyltransferase 2 from Staphylococcus aureus (strain bovine RF122 / ET3-1).